The sequence spans 360 residues: DNA replication and repair protein RecF (360 aa).

Position 30–37 (30–37 (GHNGSGKT)) interacts with ATP.

It belongs to the RecF family.

It is found in the cytoplasm. In terms of biological role, the RecF protein is involved in DNA metabolism; it is required for DNA replication and normal SOS inducibility. RecF binds preferentially to single-stranded, linear DNA. It also seems to bind ATP. This chain is DNA replication and repair protein RecF, found in Shewanella pealeana (strain ATCC 700345 / ANG-SQ1).